The sequence spans 169 residues: Ubiquitin-fold modifier-conjugating enzyme 1 (169 aa).

Cysteine 116 serves as the catalytic Glycyl thioester intermediate.

It belongs to the ubiquitin-conjugating enzyme family. UFC1 subfamily.

E2-like enzyme which forms an intermediate with UFM1 via a thioester linkage. The chain is Ubiquitin-fold modifier-conjugating enzyme 1 from Nematostella vectensis (Starlet sea anemone).